A 156-amino-acid polypeptide reads, in one-letter code: Baculoviral IAP repeat-containing protein 5.2 (156 aa).

The BIR repeat unit spans residues Arg-30–Ala-100. Thr-46 carries the phosphothreonine; by CDK1 modification. Positions 69, 72, 89, and 96 each coordinate Zn(2+).

Belongs to the IAP family. As to quaternary structure, component of the CPC at least composed of survivin/birc5, incenp, cdca8/borealin and/or cdca9/dasra-A, and aurkb/aurora-B. Interacts directly with incenp (via N-terminus). Interacts with rxra; the interaction is stronger in the absence of 9-cis retinoic acids. In terms of processing, ubiquitination is required for centrosome-targeting.

The protein resides in the cytoplasm. It is found in the nucleus. It localises to the chromosome. The protein localises to the centromere. Its subcellular location is the cytoskeleton. The protein resides in the spindle. Its function is as follows. Component of the chromosomal passenger complex (CPC), a complex that acts as a key regulator of mitosis. The CPC complex has essential functions at the centromere in ensuring correct chromosome alignment and segregation and is required for chromatin-induced microtubule stabilization and spindle assembly. Does not appear to exhibit anti-apoptotic activity. Plays a role in increasing blood vessel size during development. The polypeptide is Baculoviral IAP repeat-containing protein 5.2 (birc5.2) (Xenopus tropicalis (Western clawed frog)).